The sequence spans 345 residues: 2-oxoglutarate and iron-dependent oxygenase domain-containing protein 2 (345 aa).

The Fe2OG dioxygenase domain occupies 207-301; the sequence is DSHKAFVVKY…RWNLIIWMRA (95 aa). 3 residues coordinate Fe cation: histidine 227, aspartate 229, and histidine 282. Arginine 292 is a binding site for 2-oxoglutarate.

The protein belongs to the OGFOD2 family. Requires Fe(2+) as cofactor. It depends on L-ascorbate as a cofactor.

In Danio rerio (Zebrafish), this protein is 2-oxoglutarate and iron-dependent oxygenase domain-containing protein 2 (ogfod2).